The primary structure comprises 316 residues: Methionyl-tRNA formyltransferase (316 aa).

117 to 120 (SLLP) serves as a coordination point for (6S)-5,6,7,8-tetrahydrofolate.

Belongs to the Fmt family.

The catalysed reaction is L-methionyl-tRNA(fMet) + (6R)-10-formyltetrahydrofolate = N-formyl-L-methionyl-tRNA(fMet) + (6S)-5,6,7,8-tetrahydrofolate + H(+). In terms of biological role, attaches a formyl group to the free amino group of methionyl-tRNA(fMet). The formyl group appears to play a dual role in the initiator identity of N-formylmethionyl-tRNA by promoting its recognition by IF2 and preventing the misappropriation of this tRNA by the elongation apparatus. This is Methionyl-tRNA formyltransferase from Janthinobacterium sp. (strain Marseille) (Minibacterium massiliensis).